Reading from the N-terminus, the 21-residue chain is Protopolybiakinin-1 (21 aa).

Over residues 1–11 (DKNKKPIRVGG) the composition is skewed to basic residues. Residues 1 to 21 (DKNKKPIRVGGRRPPGFTPFR) form a disordered region.

This sequence belongs to the bradykinin-related peptide family. Expressed by the venom gland.

Its subcellular location is the secreted. Its function is as follows. Causes constriction of the isolated rat ileum muscles (is 13-fold less potent than bradykinin (BK)), as well as degranulation of mast cells (is 7-fold more potent than BK). In vivo, causes algesic effects. Muscle constriction and algesic effects are partially mediated by bradykinin receptors B2 (BDKRB2). The polypeptide is Protopolybiakinin-1 (Protopolybia exigua (Neotropical social wasp)).